The chain runs to 237 residues: tRNA (guanine-N(7)-)-methyltransferase (237 aa).

Glu-68, Glu-93, Asp-120, and Asp-143 together coordinate S-adenosyl-L-methionine. Asp-143 is a catalytic residue. Residues Lys-147, Asp-179, and 216 to 219 contribute to the substrate site; that span reads TKFE.

The protein belongs to the class I-like SAM-binding methyltransferase superfamily. TrmB family.

It catalyses the reaction guanosine(46) in tRNA + S-adenosyl-L-methionine = N(7)-methylguanosine(46) in tRNA + S-adenosyl-L-homocysteine. The protein operates within tRNA modification; N(7)-methylguanine-tRNA biosynthesis. Catalyzes the formation of N(7)-methylguanine at position 46 (m7G46) in tRNA. The chain is tRNA (guanine-N(7)-)-methyltransferase from Shewanella pealeana (strain ATCC 700345 / ANG-SQ1).